We begin with the raw amino-acid sequence, 308 residues long: Quinolinate synthase (308 aa).

Residues His-24 and Ser-41 each contribute to the iminosuccinate site. Position 86 (Cys-86) interacts with [4Fe-4S] cluster. Iminosuccinate contacts are provided by residues 112–114 (YIN) and Ser-129. Cys-172 contacts [4Fe-4S] cluster. Iminosuccinate contacts are provided by residues 198-200 (HPE) and Thr-215. A [4Fe-4S] cluster-binding site is contributed by Cys-265.

Belongs to the quinolinate synthase family. Type 2 subfamily. [4Fe-4S] cluster serves as cofactor.

The protein resides in the cytoplasm. The enzyme catalyses iminosuccinate + dihydroxyacetone phosphate = quinolinate + phosphate + 2 H2O + H(+). The protein operates within cofactor biosynthesis; NAD(+) biosynthesis; quinolinate from iminoaspartate: step 1/1. Functionally, catalyzes the condensation of iminoaspartate with dihydroxyacetone phosphate to form quinolinate. The chain is Quinolinate synthase from Sulfurihydrogenibium sp. (strain YO3AOP1).